A 318-amino-acid polypeptide reads, in one-letter code: Tyrosine--tRNA ligase (318 aa).

Tyr35 serves as a coordination point for L-tyrosine. The 'HIGH' region signature appears at 40–48; the sequence is PSGKVHLGH. L-tyrosine contacts are provided by Tyr154, Gln158, Asp161, and Gln176. Residues 211–215 carry the 'KMSKS' region motif; the sequence is KMSSS. Residue Ser214 participates in ATP binding.

Belongs to the class-I aminoacyl-tRNA synthetase family. TyrS type 3 subfamily. Homodimer.

Its subcellular location is the cytoplasm. It catalyses the reaction tRNA(Tyr) + L-tyrosine + ATP = L-tyrosyl-tRNA(Tyr) + AMP + diphosphate + H(+). Functionally, catalyzes the attachment of tyrosine to tRNA(Tyr) in a two-step reaction: tyrosine is first activated by ATP to form Tyr-AMP and then transferred to the acceptor end of tRNA(Tyr). In Methanosphaera stadtmanae (strain ATCC 43021 / DSM 3091 / JCM 11832 / MCB-3), this protein is Tyrosine--tRNA ligase.